We begin with the raw amino-acid sequence, 353 residues long: 4-hydroxy-3-methylbut-2-en-1-yl diphosphate synthase (flavodoxin) (353 aa).

Residues C265, C268, C300, and E307 each coordinate [4Fe-4S] cluster.

The protein belongs to the IspG family. It depends on [4Fe-4S] cluster as a cofactor.

The catalysed reaction is (2E)-4-hydroxy-3-methylbut-2-enyl diphosphate + oxidized [flavodoxin] + H2O + 2 H(+) = 2-C-methyl-D-erythritol 2,4-cyclic diphosphate + reduced [flavodoxin]. It functions in the pathway isoprenoid biosynthesis; isopentenyl diphosphate biosynthesis via DXP pathway; isopentenyl diphosphate from 1-deoxy-D-xylulose 5-phosphate: step 5/6. In terms of biological role, converts 2C-methyl-D-erythritol 2,4-cyclodiphosphate (ME-2,4cPP) into 1-hydroxy-2-methyl-2-(E)-butenyl 4-diphosphate. The sequence is that of 4-hydroxy-3-methylbut-2-en-1-yl diphosphate synthase (flavodoxin) from Sulfurihydrogenibium sp. (strain YO3AOP1).